The sequence spans 393 residues: Cysteine protease ATG4B (393 aa).

M1 is modified (N-acetylmethionine). Residue S34 is modified to Phosphoserine. The active-site Nucleophile is C74. At C189 the chain carries S-nitrosocysteine. Active-site residues include D278 and H280. C292 and C301 each carry S-nitrosocysteine. Residues C292 and C361 are joined by a disulfide bond. Residues S316 and S383 each carry the phosphoserine modification. Positions 388–391 (FEIL) match the LIR motif. S392 carries the phosphoserine modification.

The protein belongs to the peptidase C54 family. In terms of assembly, interacts with PFKP; promoting phosphorylation of ATG4B at Ser-34. Interacts with GBP7. Post-translationally, phosphorylation at Ser-383 and Ser-392 promotes autophagy by increasing protein delipidation activity without affecting proteolytic activation of ATG8 proteins. Phosphorylation at Ser-316 by ULK1 inhibits autophagy by decreasing both proteolytic activation and delipidation activities. Phosphorylation at Ser-316 is dephosphorylated by protein phosphatase 2A (PP2A). Phosphorylation at Ser-34 by AKT2 promotes its hydrolase activity, leading to increased proteolytic activation and delipidation of ATG8 family proteins. Phosphorylation at Ser-34 by AKT1 promotes mitochondrial localization and inhibition of the F1F0-ATP synthase activity, leading to elevation of mitochondrial reactive oxygen species (ROS). Ubiquitinated by RNF5, leading to its degradation by the proteasome. In terms of processing, S-nitrosylation at Cys-189 and Cys-292 in response to high glucose decreases both proteolytic activation and delipidation activities. Post-translationally, O-glycosylated by OGT, leading to increase protease activity, thereby promoting the proteolytic activation of ATG8 family proteins. Forms reversible intrachain disulfide bonds in response to oxidative stress. Forms interchain disulfide bonds, leading to formation of homooligomers in response to oxidation.

It is found in the cytoplasm. It localises to the cytosol. Its subcellular location is the cytoplasmic vesicle. The protein localises to the autophagosome. The protein resides in the endoplasmic reticulum. It is found in the mitochondrion. It catalyses the reaction [protein]-C-terminal L-amino acid-glycyl-phosphatidylethanolamide + H2O = [protein]-C-terminal L-amino acid-glycine + a 1,2-diacyl-sn-glycero-3-phosphoethanolamine. It carries out the reaction [protein]-C-terminal L-amino acid-glycyl-phosphatidylserine + H2O = [protein]-C-terminal L-amino acid-glycine + a 1,2-diacyl-sn-glycero-3-phospho-L-serine. With respect to regulation, inhibited by N-ethylmaleimide. Redox-regulated during autophagy since reducing conditions activate ATG4A whereas an oxidizing environment such as the presence of H(2)O(2) inhibits its activity. The cysteine protease activity compounds is inhibited by styrylquinoline compounds 4-28 and LV-320. In terms of biological role, cysteine protease that plays a key role in autophagy by mediating both proteolytic activation and delipidation of ATG8 family proteins. Required for canonical autophagy (macroautophagy), non-canonical autophagy as well as for mitophagy. The protease activity is required for proteolytic activation of ATG8 family proteins: cleaves the C-terminal amino acid of ATG8 proteins MAP1LC3A, MAP1LC3B, MAP1LC3C, GABARAPL1, GABARAPL2 and GABARAP, to reveal a C-terminal glycine. Exposure of the glycine at the C-terminus is essential for ATG8 proteins conjugation to phosphatidylethanolamine (PE) and insertion to membranes, which is necessary for autophagy. Protease activity is also required to counteract formation of high-molecular weight conjugates of ATG8 proteins (ATG8ylation): acts as a deubiquitinating-like enzyme that removes ATG8 conjugated to other proteins, such as ATG3. In addition to the protease activity, also mediates delipidation of ATG8 family proteins. Catalyzes delipidation of PE-conjugated forms of ATG8 proteins during macroautophagy. Also involved in non-canonical autophagy, a parallel pathway involving conjugation of ATG8 proteins to single membranes at endolysosomal compartments, by catalyzing delipidation of ATG8 proteins conjugated to phosphatidylserine (PS). Compared to other members of the family (ATG4A, ATG4C or ATG4C), constitutes the major protein for proteolytic activation of ATG8 proteins, while it displays weaker delipidation activity than other ATG4 paralogs. Involved in phagophore growth during mitophagy independently of its protease activity and of ATG8 proteins: acts by regulating ATG9A trafficking to mitochondria and promoting phagophore-endoplasmic reticulum contacts during the lipid transfer phase of mitophagy. The protein is Cysteine protease ATG4B of Mus musculus (Mouse).